A 335-amino-acid chain; its full sequence is Glyceraldehyde-3-phosphate dehydrogenase (335 aa).

Residues 12–13 (RI), aspartate 34, and lysine 79 contribute to the NAD(+) site. Residues 150 to 152 (SCT), threonine 181, 210 to 211 (TG), and arginine 233 contribute to the D-glyceraldehyde 3-phosphate site. The Nucleophile role is filled by cysteine 151. Residue asparagine 315 participates in NAD(+) binding.

Belongs to the glyceraldehyde-3-phosphate dehydrogenase family. Homotetramer.

The protein resides in the cytoplasm. The enzyme catalyses D-glyceraldehyde 3-phosphate + phosphate + NAD(+) = (2R)-3-phospho-glyceroyl phosphate + NADH + H(+). It functions in the pathway carbohydrate degradation; glycolysis; pyruvate from D-glyceraldehyde 3-phosphate: step 1/5. The polypeptide is Glyceraldehyde-3-phosphate dehydrogenase (GPD) (Debaryomyces hansenii (strain ATCC 36239 / CBS 767 / BCRC 21394 / JCM 1990 / NBRC 0083 / IGC 2968) (Yeast)).